Reading from the N-terminus, the 224-residue chain is Redox-sensing transcriptional repressor Rex (224 aa).

The segment at residues 17-56 (RYHRYLEELLKNDVKRISSRELSEKMGVTASQIRQDLNNF) is a DNA-binding region (H-T-H motif). Residue 91–96 (GAGNLG) participates in NAD(+) binding.

It belongs to the transcriptional regulatory Rex family. As to quaternary structure, homodimer.

Its subcellular location is the cytoplasm. Its function is as follows. Modulates transcription in response to changes in cellular NADH/NAD(+) redox state. This chain is Redox-sensing transcriptional repressor Rex, found in Thermoanaerobacter pseudethanolicus (strain ATCC 33223 / 39E) (Clostridium thermohydrosulfuricum).